Reading from the N-terminus, the 183-residue chain is Translation initiation factor IF-3 (183 aa).

This sequence belongs to the IF-3 family. Monomer.

The protein resides in the cytoplasm. IF-3 binds to the 30S ribosomal subunit and shifts the equilibrium between 70S ribosomes and their 50S and 30S subunits in favor of the free subunits, thus enhancing the availability of 30S subunits on which protein synthesis initiation begins. This Pseudomonas putida (strain ATCC 700007 / DSM 6899 / JCM 31910 / BCRC 17059 / LMG 24140 / F1) protein is Translation initiation factor IF-3.